Consider the following 219-residue polypeptide: Large ribosomal subunit protein bL25 (219 aa).

The interval 194–219 (SSTELEETPEVPASAVPTTDQGESAE) is disordered. The span at 209-219 (VPTTDQGESAE) shows a compositional bias: polar residues.

It belongs to the bacterial ribosomal protein bL25 family. CTC subfamily. In terms of assembly, part of the 50S ribosomal subunit; part of the 5S rRNA/L5/L18/L25 subcomplex. Contacts the 5S rRNA. Binds to the 5S rRNA independently of L5 and L18.

In terms of biological role, this is one of the proteins that binds to the 5S RNA in the ribosome where it forms part of the central protuberance. This is Large ribosomal subunit protein bL25 from Legionella pneumophila (strain Paris).